Here is a 279-residue protein sequence, read N- to C-terminus: Thymidylate synthase (279 aa).

141-142 (RR) provides a ligand contact to dUMP. Cys-161 serves as the catalytic Nucleophile. DUMP contacts are provided by residues 181–184 (RSND), Asn-192, and 222–224 (HVY). (6R)-5,10-methylene-5,6,7,8-tetrahydrofolate is bound at residue Asp-184. Ala-278 is a (6R)-5,10-methylene-5,6,7,8-tetrahydrofolate binding site.

This sequence belongs to the thymidylate synthase family. Bacterial-type ThyA subfamily. Homodimer.

It localises to the cytoplasm. It catalyses the reaction dUMP + (6R)-5,10-methylene-5,6,7,8-tetrahydrofolate = 7,8-dihydrofolate + dTMP. Its pathway is pyrimidine metabolism; dTTP biosynthesis. Its function is as follows. Catalyzes the reductive methylation of 2'-deoxyuridine-5'-monophosphate (dUMP) to 2'-deoxythymidine-5'-monophosphate (dTMP) while utilizing 5,10-methylenetetrahydrofolate (mTHF) as the methyl donor and reductant in the reaction, yielding dihydrofolate (DHF) as a by-product. This enzymatic reaction provides an intracellular de novo source of dTMP, an essential precursor for DNA biosynthesis. The chain is Thymidylate synthase from Bacillus mojavensis.